An 882-amino-acid polypeptide reads, in one-letter code: Alanine--tRNA ligase (882 aa).

Residues His-563, His-567, Cys-665, and His-669 each coordinate Zn(2+).

It belongs to the class-II aminoacyl-tRNA synthetase family. Zn(2+) serves as cofactor.

The protein resides in the cytoplasm. The enzyme catalyses tRNA(Ala) + L-alanine + ATP = L-alanyl-tRNA(Ala) + AMP + diphosphate. In terms of biological role, catalyzes the attachment of alanine to tRNA(Ala) in a two-step reaction: alanine is first activated by ATP to form Ala-AMP and then transferred to the acceptor end of tRNA(Ala). Also edits incorrectly charged Ser-tRNA(Ala) and Gly-tRNA(Ala) via its editing domain. The protein is Alanine--tRNA ligase of Synechococcus sp. (strain RCC307).